The primary structure comprises 386 residues: Formate-dependent phosphoribosylglycinamide formyltransferase (386 aa).

N(1)-(5-phospho-beta-D-ribosyl)glycinamide is bound by residues 15 to 16 (EL) and E75. ATP-binding positions include R107, K148, 153–158 (SSGKGQ), 188–191 (EQFI), and E196. An ATP-grasp domain is found at 112-301 (ALAAQQLNLQ…EFELHLRAIV (190 aa)). Mg(2+) is bound by residues E260 and E272. N(1)-(5-phospho-beta-D-ribosyl)glycinamide contacts are provided by residues D279, K349, and 356 to 357 (RR).

It belongs to the PurK/PurT family. Homodimer.

It catalyses the reaction N(1)-(5-phospho-beta-D-ribosyl)glycinamide + formate + ATP = N(2)-formyl-N(1)-(5-phospho-beta-D-ribosyl)glycinamide + ADP + phosphate + H(+). It participates in purine metabolism; IMP biosynthesis via de novo pathway; N(2)-formyl-N(1)-(5-phospho-D-ribosyl)glycinamide from N(1)-(5-phospho-D-ribosyl)glycinamide (formate route): step 1/1. Functionally, involved in the de novo purine biosynthesis. Catalyzes the transfer of formate to 5-phospho-ribosyl-glycinamide (GAR), producing 5-phospho-ribosyl-N-formylglycinamide (FGAR). Formate is provided by PurU via hydrolysis of 10-formyl-tetrahydrofolate. In Francisella tularensis subsp. novicida (strain U112), this protein is Formate-dependent phosphoribosylglycinamide formyltransferase.